The following is a 235-amino-acid chain: Carbohydrate deacetylase (235 aa).

Positions 61 and 124 each coordinate Mg(2+).

This sequence belongs to the YdjC deacetylase family. Mg(2+) is required as a cofactor.

Functionally, probably catalyzes the deacetylation of acetylated carbohydrates an important step in the degradation of oligosaccharides. In Bacillus cereus (strain B4264), this protein is Carbohydrate deacetylase.